The following is a 367-amino-acid chain: Chorismate synthase (367 aa).

The tract at residues 41–60 is disordered; it reads FTHDLQRRASGKSRHTSARR. NADP(+)-binding residues include R48 and R54. FMN contacts are provided by residues 125–127, 238–239, G278, 293–297, and R319; these read RSS, NA, and KPTSS.

The protein belongs to the chorismate synthase family. In terms of assembly, homotetramer. FMNH2 serves as cofactor.

It carries out the reaction 5-O-(1-carboxyvinyl)-3-phosphoshikimate = chorismate + phosphate. The protein operates within metabolic intermediate biosynthesis; chorismate biosynthesis; chorismate from D-erythrose 4-phosphate and phosphoenolpyruvate: step 7/7. Its function is as follows. Catalyzes the anti-1,4-elimination of the C-3 phosphate and the C-6 proR hydrogen from 5-enolpyruvylshikimate-3-phosphate (EPSP) to yield chorismate, which is the branch point compound that serves as the starting substrate for the three terminal pathways of aromatic amino acid biosynthesis. This reaction introduces a second double bond into the aromatic ring system. The protein is Chorismate synthase of Xanthomonas axonopodis pv. citri (strain 306).